A 321-amino-acid chain; its full sequence is D-alanine--D-alanine ligase (321 aa).

The 195-residue stretch at 121–315 (RSWFLTNNIN…FTNLIEEIIK (195 aa)) folds into the ATP-grasp domain. ATP is bound at residue 147–199 (PVKRPYVIKPLTQGSSIGVEVIFEEDDFNFADYNFPYGYQVIIEQYIKGRELQ). Positions 268, 282, and 284 each coordinate Mg(2+).

It belongs to the D-alanine--D-alanine ligase family. Mg(2+) serves as cofactor. The cofactor is Mn(2+).

Its subcellular location is the cytoplasm. The catalysed reaction is 2 D-alanine + ATP = D-alanyl-D-alanine + ADP + phosphate + H(+). Its pathway is cell wall biogenesis; peptidoglycan biosynthesis. In terms of biological role, cell wall formation. The sequence is that of D-alanine--D-alanine ligase from Rickettsia felis (strain ATCC VR-1525 / URRWXCal2) (Rickettsia azadi).